A 225-amino-acid polypeptide reads, in one-letter code: Cytidylate kinase (225 aa).

ATP is bound at residue 11–19; that stretch reads GPSGAGKGT.

The protein belongs to the cytidylate kinase family. Type 1 subfamily.

It localises to the cytoplasm. It carries out the reaction CMP + ATP = CDP + ADP. It catalyses the reaction dCMP + ATP = dCDP + ADP. This chain is Cytidylate kinase, found in Mannheimia succiniciproducens (strain KCTC 0769BP / MBEL55E).